The primary structure comprises 170 residues: Probable inosine/xanthosine triphosphatase (170 aa).

7-12 (TTNPVK) provides a ligand contact to substrate. Asp37 serves as a coordination point for Mg(2+).

It belongs to the YjjX NTPase family. Homodimer. Requires Mg(2+) as cofactor. It depends on Mn(2+) as a cofactor.

The enzyme catalyses XTP + H2O = XDP + phosphate + H(+). It catalyses the reaction ITP + H2O = IDP + phosphate + H(+). Phosphatase that hydrolyzes non-canonical purine nucleotides such as XTP and ITP to their respective diphosphate derivatives. Probably excludes non-canonical purines from DNA/RNA precursor pool, thus preventing their incorporation into DNA/RNA and avoiding chromosomal lesions. This Methanopyrus kandleri (strain AV19 / DSM 6324 / JCM 9639 / NBRC 100938) protein is Probable inosine/xanthosine triphosphatase.